The chain runs to 488 residues: Glutamyl-tRNA(Gln) amidotransferase subunit A (488 aa).

Catalysis depends on charge relay system residues Lys77 and Ser152. Ser176 serves as the catalytic Acyl-ester intermediate.

The protein belongs to the amidase family. GatA subfamily. In terms of assembly, heterotrimer of A, B and C subunits.

The enzyme catalyses L-glutamyl-tRNA(Gln) + L-glutamine + ATP + H2O = L-glutaminyl-tRNA(Gln) + L-glutamate + ADP + phosphate + H(+). Its function is as follows. Allows the formation of correctly charged Gln-tRNA(Gln) through the transamidation of misacylated Glu-tRNA(Gln) in organisms which lack glutaminyl-tRNA synthetase. The reaction takes place in the presence of glutamine and ATP through an activated gamma-phospho-Glu-tRNA(Gln). This Streptococcus agalactiae serotype III (strain NEM316) protein is Glutamyl-tRNA(Gln) amidotransferase subunit A.